We begin with the raw amino-acid sequence, 192 residues long: Ion-translocating oxidoreductase complex subunit B (192 aa).

Residues 1–26 (MNTIWIAVAAISLLGLAFGAILGYAS) form a hydrophobic region. Residues 32–91 (EDDPVVEKIDEILPQSQCGQCGYPGCRPYAEAISCNGEKINRCAPGGEAVMLKISELLNV) form the 4Fe-4S domain. Residues Cys49, Cys52, Cys57, Cys74, Cys117, Cys120, Cys123, Cys127, Cys147, Cys150, Cys153, and Cys157 each contribute to the [4Fe-4S] cluster site. 4Fe-4S ferredoxin-type domains follow at residues 108 to 137 (VVAV…GATR) and 138 to 167 (AMHT…LQPV).

Belongs to the 4Fe4S bacterial-type ferredoxin family. RnfB subfamily. As to quaternary structure, the complex is composed of six subunits: RsxA, RsxB, RsxC, RsxD, RsxE and RsxG. Requires [4Fe-4S] cluster as cofactor.

The protein localises to the cell inner membrane. Functionally, part of a membrane-bound complex that couples electron transfer with translocation of ions across the membrane. Required to maintain the reduced state of SoxR. The protein is Ion-translocating oxidoreductase complex subunit B of Escherichia fergusonii (strain ATCC 35469 / DSM 13698 / CCUG 18766 / IAM 14443 / JCM 21226 / LMG 7866 / NBRC 102419 / NCTC 12128 / CDC 0568-73).